We begin with the raw amino-acid sequence, 372 residues long: Mevalonate 3,5-bisphosphate decarboxylase (372 aa).

It belongs to the mevalonate 3,5-bisphosphate decarboxylase family. Homodimer.

It carries out the reaction (R)-3,5-bisphosphomevalonate + H(+) = isopentenyl phosphate + phosphate + CO2. The protein operates within isoprenoid biosynthesis; isopentenyl diphosphate biosynthesis via mevalonate pathway. Functionally, catalyzes the ATP-independent decarboxylation of (R)-mevalonate 3,5-bisphosphate to isopentenyl phosphate. Functions in an alternative mevalonate pathway, only present in extreme acidophiles of the Thermoplasmatales order, which passes through mevalonate 3-phosphate rather than mevalonate 5-phosphate. This is Mevalonate 3,5-bisphosphate decarboxylase from Thermoplasma volcanium (strain ATCC 51530 / DSM 4299 / JCM 9571 / NBRC 15438 / GSS1).